We begin with the raw amino-acid sequence, 27 residues long: Conotoxin Bt9.2 (27 aa).

Intrachain disulfides connect Cys-2–Cys-16, Cys-6–Cys-19, and Cys-12–Cys-24. Pro-13 is subject to 4-hydroxyproline.

As to expression, expressed by the venom duct.

It localises to the secreted. In terms of biological role, probable neurotoxin that inhibits ion channels. In Conus betulinus (Beech cone), this protein is Conotoxin Bt9.2.